The sequence spans 135 residues: Large ribosomal subunit protein eL27x (135 aa).

This sequence belongs to the eukaryotic ribosomal protein eL27 family.

The chain is Large ribosomal subunit protein eL27x (RPL27C) from Arabidopsis thaliana (Mouse-ear cress).